The primary structure comprises 146 residues: Angiogenin (146 aa).

The signal sequence occupies residues 1–24 (MVMGLGLFLLVFMLGLGLTPPTLA). Residue glutamine 25 is modified to Pyrrolidone carboxylic acid. Residue histidine 37 is the Proton acceptor of the active site. Arginine 45 contributes to the tRNA binding site. 3 cysteine pairs are disulfide-bonded: cysteine 50-cysteine 105, cysteine 63-cysteine 116, and cysteine 81-cysteine 131. The Nucleolar localization signal signature appears at 55-59 (RRRGL). Positions 105 and 127 each coordinate tRNA. The active-site Proton donor is histidine 138.

This sequence belongs to the pancreatic ribonuclease family. In terms of assembly, homodimer. Interacts with RNH1; inhibiting ANG ribonuclease activity. Interacts with PCNA.

It is found in the secreted. Its subcellular location is the nucleus. The protein resides in the nucleolus. The protein localises to the cytoplasm. It localises to the stress granule. Its activity is regulated as follows. Has weak tRNA ribonuclease activity by itself due to partial autoinhibition by its C-terminus, which folds into a short alpha-helix that partially occludes the substrate-binding site. In absence of stress, the ribonuclease activity is inhibited by RNH1 in the cytoplasm. In response to stress, dissociates from RNH1 in the cytoplasm and associates with cytoplasmic ribosomes with vacant A-sites: ribosomes directly activate the tRNA ribonuclease activity of ANG by refolding the C-terminal alpha-helix. In response to stress, the angiogenic activity of ANG is inhibited by RNH1 in the nucleus. Secreted ribonuclease that can either promote or restrict cell proliferation of target cells, depending on the context. Endocytosed in target cells via its receptor PLXNB2 and translocates to the cytoplasm or nucleus. Under stress conditions, localizes to the cytoplasm and promotes the assembly of stress granules (SGs): specifically cleaves a subset of tRNAs within anticodon loops to produce tRNA-derived stress-induced fragments (tiRNAs), resulting in translation repression and inhibition of cell proliferation. tiRNas also prevent formation of apoptosome, thereby promoting cell survival. Preferentially cleaves RNAs between a pyrimidine and an adenosine residue, suggesting that it cleaves the anticodon loop of tRNA(Ala) (32-UUAGCAU-38) after positions 33 and 36. Cleaves a subset of tRNAs, including tRNA(Ala), tRNA(Glu), tRNA(Gly), tRNA(Lys), tRNA(Val), tRNA(His), tRNA(Asp) and tRNA(Sec). Under growth conditions and in differentiated cells, translocates to the nucleus and stimulates ribosomal RNA (rRNA) transcription, including that containing the initiation site sequences of 45S rRNA, thereby promoting cell growth and proliferation. Angiogenin induces vascularization of normal and malignant tissues via its ability to promote rRNA transcription. Involved in hematopoietic stem and progenitor cell (HSPC) growth and survival by promoting rRNA transcription in growth conditions and inhibiting translation in response to stress, respectively. Mediates the crosstalk between myeloid and intestinal epithelial cells to protect the intestinal epithelial barrier integrity: secreted by myeloid cells and promotes intestinal epithelial cells proliferation and survival. Also mediates osteoclast-endothelial cell crosstalk in growing bone: produced by osteoclasts and protects the neighboring vascular cells against senescence by promoting rRNA transcription. The protein is Angiogenin (ANG) of Rhinopithecus avunculus (Tonkin snub-nosed monkey).